The primary structure comprises 99 residues: MSLSASDIARIASLARLQLASDESERMLSQINGFFDLVERMRSVDTAGVEPLAHPVAAVEDITLRLRDDVASEPDNREANQKSAPAVEAGLFLVPKVIE.

Belongs to the GatC family. As to quaternary structure, heterotrimer of A, B and C subunits.

It carries out the reaction L-glutamyl-tRNA(Gln) + L-glutamine + ATP + H2O = L-glutaminyl-tRNA(Gln) + L-glutamate + ADP + phosphate + H(+). The catalysed reaction is L-aspartyl-tRNA(Asn) + L-glutamine + ATP + H2O = L-asparaginyl-tRNA(Asn) + L-glutamate + ADP + phosphate + 2 H(+). Its function is as follows. Allows the formation of correctly charged Asn-tRNA(Asn) or Gln-tRNA(Gln) through the transamidation of misacylated Asp-tRNA(Asn) or Glu-tRNA(Gln) in organisms which lack either or both of asparaginyl-tRNA or glutaminyl-tRNA synthetases. The reaction takes place in the presence of glutamine and ATP through an activated phospho-Asp-tRNA(Asn) or phospho-Glu-tRNA(Gln). The chain is Aspartyl/glutamyl-tRNA(Asn/Gln) amidotransferase subunit C from Variovorax paradoxus (strain S110).